A 135-amino-acid chain; its full sequence is RxLR effector protein Avh5 (135 aa).

The N-terminal stretch at 1–19 (MRLQFFLVMAVATLATISA) is a signal peptide. The RxLR-dEER signature appears at 43 to 71 (RFLRTADTDIVYEPKVHNPGKKQVFIEDK). Residues K81, K83, and K84 each contribute to the a 1,2-diacyl-sn-glycero-3-phospho-(1D-myo-inositol-3-phosphate) site.

It belongs to the RxLR effector family.

The protein localises to the secreted. The protein resides in the host cell. Functionally, effector that suppresses plant defense responses during the early stages of pathogen infection. Suppresses cell death induced by effectors and PAMPs in plant hosts. In Phytophthora sojae (Soybean stem and root rot agent), this protein is RxLR effector protein Avh5.